Consider the following 123-residue polypeptide: MKTKVGFNRLNRKSSHRKALLKNMVISLFKHEKITSTKAKLSEVKRFAEKLITRAKIDSVHNRREVSKFIHDKFILNKLFTKISPIFKERKGGYVRVIKLGRRYGDAAEMAILELVDKTLEEK.

Belongs to the bacterial ribosomal protein bL17 family. As to quaternary structure, part of the 50S ribosomal subunit. Contacts protein L32.

This Borrelia hermsii (strain HS1 / DAH) protein is Large ribosomal subunit protein bL17.